A 325-amino-acid polypeptide reads, in one-letter code: Phospholipid phosphatase-related protein type 1 (325 aa).

The N-linked (GlcNAc...) asparagine glycan is linked to Asn-5. 3 helical membrane passes run 13 to 33 (IIPC…LLAY), 67 to 87 (FISP…IIFI), and 127 to 147 (FIGV…AGQV). An N-linked (GlcNAc...) asparagine glycan is attached at Asn-163. 3 consecutive transmembrane segments (helical) span residues 201–219 (AALS…TSTI), 226–244 (LAKP…LTGL), and 257–277 (VIAG…CVVH). At Ser-307 the chain carries Phosphoserine. Residue Asn-316 is glycosylated (N-linked (GlcNAc...) asparagine).

Belongs to the PA-phosphatase related phosphoesterase family. As to expression, highly expressed in the brain. Also found in the liver, kidney and testis. In the brain shows a strongest expression in the hippocampus and cerebellum.

It localises to the cell membrane. It is found in the cell projection. The protein resides in the neuron projection. Functionally, may play a role in neurite outgrowth and neurogenesis. In Rattus norvegicus (Rat), this protein is Phospholipid phosphatase-related protein type 1.